The primary structure comprises 260 residues: Circadian clock-controlled protein daywake (260 aa).

An N-terminal signal peptide occupies residues 1 to 25; that stretch reads MQLTSASVCLLWMGLLSWVSHRIDA.

The protein belongs to the TO family.

Its function is as follows. Component of the circadian clock or downstream effector of clock function. Required for suppressing daytime sleep (siesta) under ambient environmental temperatures. Part of a heat avoidance mechanism that modulates daytime sleep behavior under different environmental temperatures to minimize the risk of heat exposure. Under cooler ambient temperatures, suppresses daytime sleep (siesta) and thus allows for longer periods of daytime activity. This chain is Circadian clock-controlled protein daywake, found in Drosophila yakuba (Fruit fly).